The sequence spans 594 residues: MQKRIALSFPEEVLEHVFSFIQLDKDRNSVSLVCKSWYEIERWCRRKVFIGNCYAVSPATVIRRFPKVRSVELKGKPHFADFNLVPDGWGGYVYPWIEAMSSSYTWLEEIRLKRMVVTDDCLELIAKSFKNFKVLVLSSCEGFSTDGLAAIAATCRNLKELDLRESDVDDVSGHWLSHFPDTYTSLVSLNISCLASEVSFSALERLVTRCPNLKSLKLNRAVPLEKLATLLQRAPQLEELGTGGYTAEVRPDVYSGLSVALSGCKELRCLSGFWDAVPAYLPAVYSVCSRLTTLNLSYATVQSYDLVKLLCQCPKLQRLWVLDYIEDAGLEVLASTCKDLRELRVFPSEPFVMEPNVALTEQGLVSVSMGCPKLESVLYFCRQMTNAALITIARNRPNMTRFRLCIIEPKAPDYLTLEPLDIGFGAIVEHCKDLRRLSLSGLLTDKVFEYIGTYAKKMEMLSVAFAGDSDLGMHHVLSGCDSLRKLEIRDCPFGDKALLANASKLETMRSLWMSSCSVSFGACKLLGQKMPKLNVEVIDERGAPDSRPESCPVERVFIYRTVAGPRFDMPGFVWNMDQDSTMRFSRQIITTNGL.

The F-box domain occupies 3–50; that stretch reads KRIALSFPEEVLEHVFSFIQLDKDRNSVSLVCKSWYEIERWCRRKVFI. Residue Lys-74 participates in 1D-myo-inositol hexakisphosphate binding. The tract at residues 81-82 is interaction with auxin-responsive proteins; it reads DF. Residues 113-114 and Arg-344 contribute to the 1D-myo-inositol hexakisphosphate site; that span reads KR. An interaction with auxin-responsive proteins region spans residues 347–352; it reads PSEPFV. 1D-myo-inositol hexakisphosphate is bound at residue 401–403; that stretch reads RFR. Arg-403 contacts (indol-3-yl)acetate. An interaction with auxin-responsive proteins region spans residues 405–409; sequence CIIEP. Arg-436 provides a ligand contact to 1D-myo-inositol hexakisphosphate. 438–439 contributes to the (indol-3-yl)acetate binding site; sequence SL. The tract at residues 464–465 is interaction with auxin-responsive proteins; sequence AF. 1D-myo-inositol hexakisphosphate-binding positions include 484–485 and Arg-509; that span reads RK.

Interacts with auxin. Part of a SCF E3 ubiquitin ligase complex SCF(TIR1) composed of SKP1, CUL1, RBX1 and TIR1. SCF(TIR1) interacts with the COP9 signalosome (CSN) complex. Interacts with Aux/IAA proteins (IAA3, IAA7, IAA12 and IAA17) in an auxin-dependent manner. The interaction with IAA3, a negative regulator of auxin responses, is promoted by auxin, but repressed by juglon (5-hydroxy-1,4-naphthoquinone). Interactions with auxin-responsive proteins is inactivated by auxin antagonists. As to expression, expressed in roots, stems, leaves and flowers. In adult plants, mostly expressed in floral stigma, anther filaments, abscission zones and vascular tissues.

Its subcellular location is the nucleus. It functions in the pathway protein modification; protein ubiquitination. Its function is as follows. Auxin receptor that mediates Aux/IAA proteins proteasomal degradation and auxin-regulated transcription. The SCF(TIR1) E3 ubiquitin ligase complex is involved in auxin-mediated signaling pathway that regulate root and hypocotyl growth, lateral root formation, cell elongation, and gravitropism. Appears to allow pericycle cells to overcome G2 arrest prior to lateral root development. Plays a role in ethylene signaling in roots. Confers sensitivity to the virulent bacterial pathogen P.syringae. The protein is Protein TRANSPORT INHIBITOR RESPONSE 1 (TIR1) of Arabidopsis thaliana (Mouse-ear cress).